Reading from the N-terminus, the 541-residue chain is Zinc finger protein 655 (541 aa).

The segment at 1–22 (MEEVTSQEAAESPRGHFQPLEN) is disordered. C2H2-type zinc fingers lie at residues 243–265 (YKCD…QRIH), 271–293 (YKCK…KRIH), 334–356 (YKCG…QRTH), 361–383 (CKCT…QRLH), 411–433 (YSCN…QRIH), and 439–461 (HECN…HKMH). The C2H2-type 7; degenerate zinc finger occupies 495-517 (FDCDAWEENFSQRAHLIQHERVH).

This sequence belongs to the krueppel C2H2-type zinc-finger protein family. Interacts with VAV1 and CDK4. Interacts with INTS13; promoting association with the integrator complex.

It localises to the nucleus. In terms of biological role, probable transcription factor. The polypeptide is Zinc finger protein 655 (Znf655) (Mus musculus (Mouse)).